The following is a 159-amino-acid chain: Transcription repressor OFP6 (159 aa).

Positions 39–60 (PKRPSSTYRHCHSSISSATPSS) are disordered. Over residues 51–60 (SSISSATPSS) the composition is skewed to low complexity. The OVATE domain maps to 70–129 (VEKDSDDPYLDFRQSMLQMILENQIYSKDELRELLQCFLSLNSHYHHGIIVRAFSEIWED).

Interacts with KNAT1 and KNAT7. As to expression, expressed in roots, shoots, rosette and cauline leaves, stems, flower buds and siliques.

It is found in the nucleus. Its function is as follows. Transcriptional repressor that regulates multiple aspects of plant growth and development through the regulation of BEL1-LIKE (BLH) and KNOX TALE (KNAT) homeodomain transcription factors. In Arabidopsis thaliana (Mouse-ear cress), this protein is Transcription repressor OFP6 (OFP6).